Consider the following 148-residue polypeptide: Large ribosomal subunit protein uL22 (148 aa).

Belongs to the universal ribosomal protein uL22 family. Part of the 50S ribosomal subunit.

In terms of biological role, this protein binds specifically to 23S rRNA; its binding is stimulated by other ribosomal proteins, e.g. L4, L17, and L20. It is important during the early stages of 50S assembly. It makes multiple contacts with different domains of the 23S rRNA in the assembled 50S subunit and ribosome. Its function is as follows. The globular domain of the protein is located near the polypeptide exit tunnel on the outside of the subunit, while an extended beta-hairpin is found that lines the wall of the exit tunnel in the center of the 70S ribosome. The sequence is that of Large ribosomal subunit protein uL22 from Thermosipho africanus (strain TCF52B).